Consider the following 528-residue polypeptide: Na(+)/H(+) antiporter NhaB (528 aa).

Transmembrane regions (helical) follow at residues 25–47 (IISF…GWLL), 66–86 (PGGL…SQVL), 97–117 (LLLV…LFVF), 130–164 (VSLL…FYSI), 241–261 (IRMS…CFLV), 304–324 (AFIG…VGLI), 351–371 (ALPF…IIDL), 390–410 (LVVF…VFVG), 448–468 (ATPN…APLI), and 476–496 (VWMA…AIQL).

The protein belongs to the NhaB Na(+)/H(+) (TC 2.A.34) antiporter family.

It is found in the cell inner membrane. It catalyses the reaction 2 Na(+)(in) + 3 H(+)(out) = 2 Na(+)(out) + 3 H(+)(in). Its function is as follows. Na(+)/H(+) antiporter that extrudes sodium in exchange for external protons. The sequence is that of Na(+)/H(+) antiporter NhaB from Shewanella halifaxensis (strain HAW-EB4).